The primary structure comprises 404 residues: Transcriptional repressor OPI1 (404 aa).

Serine 10 is subject to Phosphoserine. The interval 25–51 (QSCRQKSQPSEDVSQADKMPASESSTT) is disordered. Over residues 26 to 37 (SCRQKSQPSEDV) the composition is skewed to polar residues. Residues 109–138 (KRQKLSRAIAKGKDNLKEYKLNMSIESKKR) form a basic motif region. A leucine-zipper region spans residues 139-160 (LVTCLHLLKLANKQLSDKISCL). 3 disordered regions span residues 170–201 (HPLHKQDGNARTTTGAGEDETSSDEDDDDEEF), 305–327 (LQQQQQKRNKDGDDSASPSSSVT), and 378–404 (QQQQYRQQQQKDGNYVKPSQDNVDSKD). Acidic residues predominate over residues 186 to 201 (GEDETSSDEDDDDEEF). The FFAT signature appears at 200–206 (EFFDASE). The segment covering 378-387 (QQQQYRQQQQ) has biased composition (low complexity). A compositionally biased stretch (polar residues) spans 394–404 (KPSQDNVDSKD).

As to quaternary structure, interacts with SCS2.

The protein resides in the endoplasmic reticulum. It is found in the nucleus. Functionally, negative regulator of the transcriptional complex INO2-INO4 in response to phospholipid precursor availability. When precursors become limiting, OPI1 is retained at the endoplasmic reticulum (ER) and INO2-INO4 activates INO1 and other genes required for phospholipid biosynthesis, whereas abundant precursor availability results in targeting of OPI1 to the nucleus to repress transcription of these genes. Binds directly to phosphatidic acid, which is required for ER targeting and may act as sensing mechanism for precursor availability, as phosphatidic acid becomes rapidly depleted upon phospholipid biosynthesis. This Saccharomyces cerevisiae (strain ATCC 204508 / S288c) (Baker's yeast) protein is Transcriptional repressor OPI1 (OPI1).